The primary structure comprises 309 residues: Ribosomal RNA small subunit methyltransferase H (309 aa).

S-adenosyl-L-methionine-binding positions include 33–35 (GGH), Asp-53, Phe-79, Asp-100, and Gln-107.

Belongs to the methyltransferase superfamily. RsmH family.

It is found in the cytoplasm. It catalyses the reaction cytidine(1402) in 16S rRNA + S-adenosyl-L-methionine = N(4)-methylcytidine(1402) in 16S rRNA + S-adenosyl-L-homocysteine + H(+). Its function is as follows. Specifically methylates the N4 position of cytidine in position 1402 (C1402) of 16S rRNA. The polypeptide is Ribosomal RNA small subunit methyltransferase H (Clostridium kluyveri (strain NBRC 12016)).